The sequence spans 221 residues: Ribosomal RNA small subunit methyltransferase Nep1 (221 aa).

S-adenosyl-L-methionine contacts are provided by residues Gly-174, Gly-179, and 196 to 201 (VGDEPL).

This sequence belongs to the class IV-like SAM-binding methyltransferase superfamily. RNA methyltransferase NEP1 family. As to quaternary structure, homodimer.

The catalysed reaction is a pseudouridine in rRNA + S-adenosyl-L-methionine = an N(1)-methylpseudouridine in rRNA + S-adenosyl-L-homocysteine + H(+). Its function is as follows. Methyltransferase involved in ribosomal biogenesis. Specifically catalyzes the N1-methylation of the pseudouridine corresponding to position 914 in M.jannaschii 16S rRNA. The protein is Ribosomal RNA small subunit methyltransferase Nep1 of Pyrobaculum neutrophilum (strain DSM 2338 / JCM 9278 / NBRC 100436 / V24Sta) (Thermoproteus neutrophilus).